Here is a 538-residue protein sequence, read N- to C-terminus: Cytochrome P450 monooxygenase fogE (538 aa).

Residues 4–24 (ASSAILLVALIAALWRLSLIG) form a helical membrane-spanning segment. Heme is bound at residue Cys-437.

The protein belongs to the cytochrome P450 family. Requires heme as cofactor.

It localises to the membrane. It participates in secondary metabolite biosynthesis. In terms of biological role, cytochrome P450 monooxygenase; part of the gene cluster that mediates the biosynthesis of flavoglaucin and congeners (including aspergin, dihydroauroglaucin and auroglaucin), prenylated salicylaldehyde derivatives carrying a saturated or an unsaturated C-7 side chain. The PKS fogA releases the carboxylic acid (8E,10E,12E)-3,5,7-trihydroxytetradeca-8,10,12-trienoic acid as its product, as well as derivatives with one and two double bonds. FogA is indeed able to reduce the initial triketide, thus being at least partially responsible for the differently saturated heptyl side chains of flavoglaucin congeners. The oxidoreductases fogB, fogC and fogD modify the nascent polyketide in fogA-bound form and, together, fogA, fogB, fogC and fogD are necessary for the formation of the aromatic core and the cyclized PKS products are released as salicyl alcohols. In particular, fogB is responsible for oxidation of a hydroxyl group or reduction of remaining double bond(s) at the C-7 residue whereas fogD is probably involved in the reductive release of the modified PKS products. The cytochrome P450 monooxygenase fogE is then responsible for the hydroxylation at C-3 of the benzene ring. The fogE products are substrates of the prenyltransferase fogH and the prenylated benzyl alcohols are subsequently oxidized by the fogF to produce the final aryl aldehydes flavoglaucin and congeners. The short-chain dehydrogenase fogG does not seem to be involved in the biosynthesis of the prenylated salicylaldehyde derivatives. The sequence is that of Cytochrome P450 monooxygenase fogE from Aspergillus ruber (strain CBS 135680).